A 336-amino-acid chain; its full sequence is Mitochondrial amidoxime reducing component 2 (336 aa).

Residues 1–35 (MGAAGSSALARLGLPALPGPRWLGVAALGLAAVAL) constitute a mitochondrion transit peptide. Glycyl lysine isopeptide (Lys-Gly) (interchain with G-Cter in ubiquitin) cross-links involve residues Lys138, Lys144, Lys173, Lys187, Lys287, and Lys294. In terms of domain architecture, MOSC spans 188–334 (ARASNEIFPS…LKVGDPVYQM (147 aa)).

As to quaternary structure, component of a complex composed of cytochrome b5, NADH-cytochrome b5 reductase (CYB5R3) and MTARC2. Requires Mo-molybdopterin as cofactor. Post-translationally, ubiquitinated by PRKN during mitophagy, leading to its degradation and enhancement of mitophagy. Deubiquitinated by USP30.

It is found in the mitochondrion outer membrane. The protein localises to the peroxisome. It carries out the reaction N(omega)-hydroxy-L-arginine + 2 Fe(II)-[cytochrome b5] + 2 H(+) = L-arginine + 2 Fe(III)-[cytochrome b5] + H2O. Catalyzes the reduction of N-oxygenated molecules, acting as a counterpart of cytochrome P450 and flavin-containing monooxygenases in metabolic cycles. As a component of prodrug-converting system, reduces a multitude of N-hydroxylated prodrugs particularly amidoximes, leading to increased drug bioavailability. May be involved in mitochondrial N(omega)-hydroxy-L-arginine (NOHA) reduction, regulating endogenous nitric oxide levels and biosynthesis. Postulated to cleave the N-OH bond of N-hydroxylated substrates in concert with electron transfer from NADH to cytochrome b5 reductase then to cytochrome b5, the ultimate electron donor that primes the active site for substrate reduction. This Bos taurus (Bovine) protein is Mitochondrial amidoxime reducing component 2 (MTARC2).